Reading from the N-terminus, the 129-residue chain is Glycine cleavage system H protein (129 aa).

The Lipoyl-binding domain occupies 24–106; that stretch reads TYTVGITEHA…YGQGWIFKIK (83 aa). Lys-65 is subject to N6-lipoyllysine.

This sequence belongs to the GcvH family. The glycine cleavage system is composed of four proteins: P, T, L and H. Requires (R)-lipoate as cofactor.

The glycine cleavage system catalyzes the degradation of glycine. The H protein shuttles the methylamine group of glycine from the P protein to the T protein. In Cronobacter sakazakii (strain ATCC BAA-894) (Enterobacter sakazakii), this protein is Glycine cleavage system H protein.